Consider the following 388-residue polypeptide: Putative pyridoxal phosphate-dependent aminotransferase EpsN (388 aa).

At lysine 190 the chain carries N6-(pyridoxal phosphate)lysine.

It belongs to the DegT/DnrJ/EryC1 family. The cofactor is pyridoxal 5'-phosphate.

Its function is as follows. May be involved in the production of the exopolysaccharide (EPS) component of the extracellular matrix during biofilm formation. EPS is responsible for the adhesion of chains of cells into bundles. In Bacillus subtilis (strain 168), this protein is Putative pyridoxal phosphate-dependent aminotransferase EpsN (epsN).